The following is a 1461-amino-acid chain: Neogenin (1461 aa).

A signal peptide spans 1–33; that stretch reads MAAERGARRLLSTPSFWLYCLLLLGRRAPGAAA. Residues 34–1105 are Extracellular-facing; sequence ARSGSAPQSP…PTSPLDSNML (1072 aa). 4 Ig-like C2-type domains span residues 52 to 141, 152 to 238, 243 to 336, and 341 to 426; these read PFYF…TIIS, PRFT…VELK, PEVI…AELT, and PEFL…AQLI. N-linked (GlcNAc...) asparagine glycosylation is present at N73. 3 disulfides stabilise this stretch: C74/C129, C173/C221, and C270/C320. N210 carries N-linked (GlcNAc...) asparagine glycosylation. An N-linked (GlcNAc...) asparagine glycan is attached at N326. C362 and C410 are oxidised to a cystine. Fibronectin type-III domains are found at residues 441–535, 541–631, 636–731, 741–831, 856–952, and 957–1054; these read APRD…TQPE, PAPN…TLSD, APQN…TFES, VPSS…RPHT, PPVG…TFEL, and PPKD…TPKA. N-linked (GlcNAc...) asparagine glycans are attached at residues N470 and N489. 2 N-linked (GlcNAc...) asparagine glycosylation sites follow: N639 and N715. The N-linked (GlcNAc...) asparagine glycan is linked to N909. A disordered region spans residues 1041–1097; that stretch reads GPMSEAVQFRTPKADSSDKMPNDQASGSGGKGSRLPDLGSDYKPPMSGSNSPHGSPT. Basic and acidic residues predominate over residues 1052–1061; it reads PKADSSDKMP. Polar residues predominate over residues 1087–1097; sequence SGSNSPHGSPT. A helical membrane pass occupies residues 1106 to 1126; the sequence is LVIIVSVGVITIVVVVIIAVF. The Cytoplasmic portion of the chain corresponds to 1127 to 1461; sequence CTRRTTSHQK…MKDLNAITTA (335 aa). Disordered regions lie at residues 1138-1160, 1174-1206, 1235-1276, and 1289-1381; these read KRAACKSVNGSHKYKGNSKDVKP, PIDKSPDPNPIMTDTPIPRNSQDITPVDNSMDS, PKMM…PARS, and TSMS…ALPS. Phosphoserine is present on residues S1178 and S1194. Positions 1191-1206 are enriched in polar residues; sequence PRNSQDITPVDNSMDS. T1198 carries the post-translational modification Phosphothreonine. 2 stretches are compositionally biased toward polar residues: residues 1289–1322 and 1330–1349; these read TSMSLSDRANSTESVRNTPSTDTMPASSSQTCCT and ATSSSYLASSQEEDSGQSLP. Positions 1366-1375 are enriched in pro residues; that stretch reads AIPPPGPPTY. The residue at position 1401 (S1401) is a Phosphoserine. T1404 carries the phosphothreonine modification. Residues S1432, S1434, and S1435 each carry the phosphoserine modification.

The protein belongs to the immunoglobulin superfamily. DCC family. Interacts with MYO10. Interacts with RGMA and RGMB. Interacts with BMP2, BMP4, BMP6, and BMP7. In terms of tissue distribution, widely expressed and also in cancer cell lines.

It localises to the cell membrane. Its function is as follows. Multi-functional cell surface receptor regulating cell adhesion in many diverse developmental processes, including neural tube and mammary gland formation, myogenesis and angiogenesis. Receptor for members of the BMP, netrin, and repulsive guidance molecule (RGM) families. Netrin-Neogenin interactions result in a chemoattractive axon guidance response and cell-cell adhesion, the interaction between NEO1/Neogenin and RGMa and RGMb induces a chemorepulsive response. This Homo sapiens (Human) protein is Neogenin (NEO1).